We begin with the raw amino-acid sequence, 106 residues long: PTS system N,N'-diacetylchitobiose-specific EIIB component (106 aa).

The PTS EIIB type-3 domain maps to 3 to 106 (KKHIYLFCSA…VAAIKKAAAN (104 aa)). Catalysis depends on Cys-10, which acts as the Phosphocysteine intermediate. At Cys-10 the chain carries Phosphocysteine; by EIIA.

As to quaternary structure, forms a complex with ChbA (EIIA). ChbB is a monomer in both its unphosphorylated and phosphorylated forms.

The protein localises to the cytoplasm. The enzyme catalyses N,N'-diacetylchitobiose(out) + N(pros)-phospho-L-histidyl-[protein] = diacetylchitobiose-6'-phosphate(in) + L-histidyl-[protein]. Functionally, the phosphoenolpyruvate-dependent sugar phosphotransferase system (sugar PTS), a major carbohydrate active transport system, catalyzes the phosphorylation of incoming sugar substrates concomitantly with their translocation across the cell membrane. The enzyme II ChbABC PTS system is involved in the transport of the chitin disaccharide N,N'-diacetylchitobiose (GlcNAc2). This Escherichia coli O157:H7 protein is PTS system N,N'-diacetylchitobiose-specific EIIB component (chbB).